The primary structure comprises 484 residues: Serine protease HTR4 (484 aa).

Positions 1–28 are cleaved as a signal peptide; sequence MARPLQRPAGLGPFVLLWLLLPAPSGRG. One can recognise an IGFBP N-terminal domain in the interval 36–114; the sequence is PVPRCPAACE…GRPLGTCGCP (79 aa). Cystine bridges form between C40–C66, C44–C68, C49–C69, C55–C72, C80–C94, C88–C111, C113–C132, and C121–C157. Residues 105-159 enclose the Kazal-like domain; the sequence is GRPLGTCGCPAAGATVCGSDGRTYRSLCALRAENRAARLRGALPAVPVQKGDCGD. The interval 209–369 is serine protease; it reads ASGFIVSEDG…IPSDRIRQFL (161 aa). Active-site charge relay system residues include H225, D255, and S333. Residues 390–472 form the PDZ domain; the sequence is LRMLPLTMNL…LSLLVRRKSQ (83 aa).

It belongs to the peptidase S1C family.

The protein localises to the secreted. In terms of biological role, serine protease. The polypeptide is Serine protease HTR4 (HTRA4) (Bos taurus (Bovine)).